A 472-amino-acid polypeptide reads, in one-letter code: Cannabinoid receptor 1 (472 aa).

Topologically, residues Met1 to Gln116 are extracellular. Residues Lys2–Val23 form a required for mitochondrial localization region. Residues Asn77 and Asn83 are each glycosylated (N-linked (GlcNAc...) asparagine). A helical membrane pass occupies residues Leu117–Leu142. Residues His143 to His154 are Cytoplasmic-facing. A helical transmembrane segment spans residues Phe155–Ile175. The Extracellular segment spans residues Asp176 to Asn187. A helical transmembrane segment spans residues Val188–Ile212. The Cytoplasmic portion of the chain corresponds to Asp213–Lys232. The helical transmembrane segment at Ala233–Trp255 threads the bilayer. At Asn256–Glu273 the chain is on the extracellular side. The chain crosses the membrane as a helical span at residues Thr274–Trp299. At Lys300–Thr344 the chain is on the cytoplasmic side. Residues Leu345 to Tyr365 form a helical membrane-spanning segment. Over Asp366–Thr377 the chain is Extracellular. Residues Val378–Leu399 form a helical membrane-spanning segment. Topologically, residues Arg400 to Leu472 are cytoplasmic. Cys415 carries the S-palmitoyl cysteine lipid modification. 2 positions are modified to phosphoserine: Ser425 and Ser429.

It belongs to the G-protein coupled receptor 1 family. As to quaternary structure, interacts (via C-terminus) with CNRIP1; this interaction attenuates constitutive, but not agonist-dependent, inhibition of voltage-gated Ca(2+) channels in neurons. Associates with G protein alpha subunits, including G(i) alpha-1/GNAI1, G(i) alpha-3/GNAI3 and G(o)-alpha/GNAO1; palmitoylation is important for interaction with GNAI3 and GNAO1. In terms of processing, palmitoylation at Cys-415 is important for recruitment at plasma membrane and lipid rafts and association with G protein alpha subunits. As to expression, widely expressed, with highest levels in fetal and adult brain. Expression levels of isoform 2 and isoform 3 are much lower than those of isoform 1.

It is found in the cell membrane. The protein resides in the membrane raft. Its subcellular location is the mitochondrion outer membrane. The protein localises to the cell projection. It localises to the axon. It is found in the presynapse. With respect to regulation, hemopressin, a peptide derived from hemoglobin subunit alpha (HBA1 and/or HBA2), acts as an antagonist peptide: hemopressin-binding efficiently blocks cannabinoid receptor CNR1 and subsequent signaling. In terms of biological role, G-protein coupled receptor for endogenous cannabinoids (eCBs), including N-arachidonoylethanolamide (also called anandamide or AEA) and 2-arachidonoylglycerol (2-AG), as well as phytocannabinoids, such as delta(9)-tetrahydrocannabinol (THC). Mediates many cannabinoid-induced effects, acting, among others, on food intake, memory loss, gastrointestinal motility, catalepsy, ambulatory activity, anxiety, chronic pain. Signaling typically involves reduction in cyclic AMP. In the hypothalamus, may have a dual effect on mitochondrial respiration depending upon the agonist dose and possibly upon the cell type. Increases respiration at low doses, while decreases respiration at high doses. At high doses, CNR1 signal transduction involves G-protein alpha-i protein activation and subsequent inhibition of mitochondrial soluble adenylate cyclase, decrease in cyclic AMP concentration, inhibition of protein kinase A (PKA)-dependent phosphorylation of specific subunits of the mitochondrial electron transport system, including NDUFS2. In the hypothalamus, inhibits leptin-induced reactive oxygen species (ROS) formation and mediates cannabinoid-induced increase in SREBF1 and FASN gene expression. In response to cannabinoids, drives the release of orexigenic beta-endorphin, but not that of melanocyte-stimulating hormone alpha/alpha-MSH, from hypothalamic POMC neurons, hence promoting food intake. In the hippocampus, regulates cellular respiration and energy production in response to cannabinoids. Involved in cannabinoid-dependent depolarization-induced suppression of inhibition (DSI), a process in which depolarization of CA1 postsynaptic pyramidal neurons mobilizes eCBs, which retrogradely activate presynaptic CB1 receptors, transiently decreasing GABAergic inhibitory neurotransmission. Also reduces excitatory synaptic transmission. In superior cervical ganglions and cerebral vascular smooth muscle cells, inhibits voltage-gated Ca(2+) channels in a constitutive, as well as agonist-dependent manner. In cerebral vascular smooth muscle cells, cannabinoid-induced inhibition of voltage-gated Ca(2+) channels leads to vasodilation and decreased vascular tone. Induces leptin production in adipocytes and reduces LRP2-mediated leptin clearance in the kidney, hence participating in hyperleptinemia. In adipose tissue, CNR1 signaling leads to increased expression of SREBF1, ACACA and FASN genes. In the liver, activation by endocannabinoids leads to increased de novo lipogenesis and reduced fatty acid catabolism, associated with increased expression of SREBF1/SREBP-1, GCK, ACACA, ACACB and FASN genes. May also affect de novo cholesterol synthesis and HDL-cholesteryl ether uptake. Peripherally modulates energy metabolism. In high carbohydrate diet-induced obesity, may decrease the expression of mitochondrial dihydrolipoyl dehydrogenase/DLD in striated muscles, as well as that of selected glucose/ pyruvate metabolic enzymes, hence affecting energy expenditure through mitochondrial metabolism. In response to cannabinoid anandamide, elicits a pro-inflammatory response in macrophages, which involves NLRP3 inflammasome activation and IL1B and IL18 secretion. In macrophages infiltrating pancreatic islets, this process may participate in the progression of type-2 diabetes and associated loss of pancreatic beta-cells. Its function is as follows. Binds both 2-arachidonoylglycerol (2-AG) and anandamide. Functionally, only binds 2-arachidonoylglycerol (2-AG) with high affinity. Contrary to its effect on isoform 1, 2-AG behaves as an inverse agonist on isoform 2 in assays measuring GTP binding to membranes. Only binds 2-arachidonoylglycerol (2-AG) with high affinity. Contrary to its effect on isoform 1, 2-AG behaves as an inverse agonist on isoform 3 in assays measuring GTP binding to membranes. This chain is Cannabinoid receptor 1 (CNR1), found in Homo sapiens (Human).